A 792-amino-acid chain; its full sequence is Kinesin-related protein 2 (792 aa).

Disordered regions lie at residues 22–50 (TINS…PPST) and 162–183 (NNIN…SPVQ). A compositionally biased stretch (polar residues) spans 34-50 (ASSSSQSNDRISYPPST). Residues 284–423 (RLSLSIQDIK…LEKSRSDEKV (140 aa)) are a coiled coil. Positions 437–781 (NIRVFCRIRP…LRFAAKVNSC (345 aa)) constitute a Kinesin motor domain. 528 to 535 (GQTGSGKT) serves as a coordination point for ATP.

It belongs to the TRAFAC class myosin-kinesin ATPase superfamily. Kinesin family. NCD subfamily.

Its subcellular location is the nucleus. The protein localises to the cytoplasm. The protein resides in the cytoskeleton. It localises to the spindle. Its function is as follows. Microtubule-dependent motor that is probably involved in microtubule organization in the mitotic spindle. The chain is Kinesin-related protein 2 (kif2) from Dictyostelium discoideum (Social amoeba).